We begin with the raw amino-acid sequence, 207 residues long: Large ribosomal subunit protein bL20 (207 aa).

Positions 117–161 are disordered; that stretch reads QETQPQPEEKTSLQPEKVLSTELSEEKSDDTLETKPQTTQVKAKK. The span at 140-149 shows a compositional bias: basic and acidic residues; that stretch reads SEEKSDDTLE.

This sequence belongs to the bacterial ribosomal protein bL20 family.

Functionally, binds directly to 23S ribosomal RNA and is necessary for the in vitro assembly process of the 50S ribosomal subunit. It is not involved in the protein synthesizing functions of that subunit. In Onion yellows phytoplasma (strain OY-M), this protein is Large ribosomal subunit protein bL20.